The primary structure comprises 503 residues: Sodium/hydrogen exchanger 3 (503 aa).

Residues 1–22 lie on the Cytoplasmic side of the membrane; sequence MVIGLSTMLEKTEALFASDHAS. The chain crosses the membrane as a helical span at residues 23-43; sequence VVSMNLFVALLCACIVLGHLL. Topologically, residues 44-51 are vacuolar; the sequence is EETRWMNE. Asn50 is a glycosylation site (N-linked (GlcNAc...) asparagine). The helical transmembrane segment at 52–72 threads the bilayer; the sequence is SITALIIGSCTGIVILLISGG. At 73 to 76 the chain is on the cytoplasmic side; it reads KSSR. An intramembrane region (helical) is located at residues 77 to 97; it reads ILVFSEDLFFIYLLPPIIFNA. Topologically, residues 98-109 are cytoplasmic; it reads GFQVKKKQFFRN. A helical membrane pass occupies residues 110 to 130; sequence FMTIMLFGAIGTLISFVIISF. The Vacuolar portion of the chain corresponds to 131–138; it reads GAKHLFEK. A helical transmembrane segment spans residues 139–159; the sequence is MNIGDLTIADYLAIGAIFSAT. Residues 160–174 lie on the Cytoplasmic side of the membrane; that stretch reads DSVCTLQVLNQDETP. Residues 175 to 195 form a helical membrane-spanning segment; the sequence is LLYSLVFGEGVVNDATSVVLF. Topologically, residues 196 to 219 are vacuolar; it reads NAIQRFDLTNINSAIALEFAGNFF. A helical transmembrane segment spans residues 220–240; the sequence is YLFILSTALGVAAGLLSAFVI. Topologically, residues 241–265 are cytoplasmic; sequence KKLYIGRHSTDREVALMMLLAYLSY. A helical transmembrane segment spans residues 266-286; the sequence is MLAELFHLSSILTVFFCGIVM. At 287-305 the chain is on the vacuolar side; sequence SHYTWHNVTDKSKVTTKHT. Residue Asn293 is glycosylated (N-linked (GlcNAc...) asparagine). The chain crosses the membrane as a helical span at residues 306–326; sequence FAAMSFLAEIFIFLYVGMDAL. The Cytoplasmic portion of the chain corresponds to 327 to 345; the sequence is DIEKWDVVRNSPGQSIGVS. The helical transmembrane segment at 346-366 threads the bilayer; the sequence is SILLGLILLGRAAFVFPLSFL. The Vacuolar portion of the chain corresponds to 367–383; the sequence is SNLTKSSPDEKIDLKKQ. Asn368 carries an N-linked (GlcNAc...) asparagine glycan. Residues 384–406 form a helical membrane-spanning segment; sequence VTIWWAGLMRGAVSMALAYNQFT. Over 407 to 416 the chain is Cytoplasmic; the sequence is TSGHTKVLGN. A helical membrane pass occupies residues 417-437; sequence AIMITSTITVVLFSTVVFGLL. The Vacuolar segment spans residues 438–503; it reads TKPLVKHLQP…FWKSPSRFTH (66 aa).

This sequence belongs to the monovalent cation:proton antiporter 1 (CPA1) transporter (TC 2.A.36) family. As to expression, expressed in roots.

The protein resides in the vacuole membrane. The enzyme catalyses Na(+)(in) + H(+)(out) = Na(+)(out) + H(+)(in). The catalysed reaction is K(+)(in) + H(+)(out) = K(+)(out) + H(+)(in). Its function is as follows. May act in low affinity electroneutral exchange of protons for cations such as Na(+) or K(+) across membranes. May also exchange Li(+) and Cs(+) with a lower affinity. This chain is Sodium/hydrogen exchanger 3 (NHX3), found in Arabidopsis thaliana (Mouse-ear cress).